The chain runs to 685 residues: DNA ligase (685 aa).

NAD(+)-binding positions include 48–52 (DAEYD), 97–98 (SL), and glutamate 131. The active-site N6-AMP-lysine intermediate is lysine 133. The NAD(+) site is built by arginine 154, glutamate 190, lysine 304, and lysine 328. Zn(2+) contacts are provided by cysteine 422, cysteine 425, cysteine 440, and cysteine 445. The BRCT domain occupies 603–685 (PEEGPLSGRR…RLLSGEERPG (83 aa)).

It belongs to the NAD-dependent DNA ligase family. LigA subfamily. Mg(2+) serves as cofactor. The cofactor is Mn(2+).

The enzyme catalyses NAD(+) + (deoxyribonucleotide)n-3'-hydroxyl + 5'-phospho-(deoxyribonucleotide)m = (deoxyribonucleotide)n+m + AMP + beta-nicotinamide D-nucleotide.. In terms of biological role, DNA ligase that catalyzes the formation of phosphodiester linkages between 5'-phosphoryl and 3'-hydroxyl groups in double-stranded DNA using NAD as a coenzyme and as the energy source for the reaction. It is essential for DNA replication and repair of damaged DNA. In Rubrobacter xylanophilus (strain DSM 9941 / JCM 11954 / NBRC 16129 / PRD-1), this protein is DNA ligase.